The sequence spans 412 residues: Argininosuccinate synthase (412 aa).

10 to 18 (AYSGGLDTS) contacts ATP. Residue tyrosine 89 coordinates L-citrulline. Glycine 119 contacts ATP. Threonine 121, asparagine 125, and aspartate 126 together coordinate L-aspartate. Asparagine 125 provides a ligand contact to L-citrulline. Positions 129, 177, 261, and 273 each coordinate L-citrulline.

It belongs to the argininosuccinate synthase family. Type 1 subfamily. Homotetramer.

The protein resides in the cytoplasm. It catalyses the reaction L-citrulline + L-aspartate + ATP = 2-(N(omega)-L-arginino)succinate + AMP + diphosphate + H(+). It participates in amino-acid biosynthesis; L-arginine biosynthesis; L-arginine from L-ornithine and carbamoyl phosphate: step 2/3. The sequence is that of Argininosuccinate synthase from Bifidobacterium longum (strain NCC 2705).